A 1645-amino-acid chain; its full sequence is Protein MON2 homolog (1645 aa).

It belongs to the MON2 family.

May be required for traffic between late Golgi and early endosomes. The polypeptide is Protein MON2 homolog (Caenorhabditis briggsae).